The sequence spans 105 residues: MKMIRAVVRPSKAEEVVDALAESGCLALTKMDVIGRGKQKGIKIDQIYYDELPKTMLMLVVEDDTAENVIELITKTAYTGSFGYGKIFVSPVDEAYTVRTRSCGL.

This sequence belongs to the P(II) protein family.

In terms of biological role, could be involved in the regulation of nitrogen fixation. The chain is Nitrogen fixation nifHD region glnB-like protein 1 (glnBI) from Methanococcus maripaludis (Methanococcus deltae).